Reading from the N-terminus, the 20-residue chain is Putative phosphoglycerate kinase (20 aa).

It belongs to the phosphoglycerate kinase family. As to quaternary structure, monomer.

It localises to the cytoplasm. The enzyme catalyses (2R)-3-phosphoglycerate + ATP = (2R)-3-phospho-glyceroyl phosphate + ADP. It participates in carbohydrate degradation; glycolysis; pyruvate from D-glyceraldehyde 3-phosphate: step 2/5. The chain is Putative phosphoglycerate kinase (pgk) from Clostridium pasteurianum.